A 267-amino-acid polypeptide reads, in one-letter code: Glutamate racemase (267 aa).

Substrate-binding positions include 13–14 (DS) and 45–46 (YG). The active-site Proton donor/acceptor is C77. Position 78–79 (78–79 (NT)) interacts with substrate. C192 acts as the Proton donor/acceptor in catalysis. Residue 193–194 (TH) participates in substrate binding.

It belongs to the aspartate/glutamate racemases family.

It catalyses the reaction L-glutamate = D-glutamate. It functions in the pathway cell wall biogenesis; peptidoglycan biosynthesis. In terms of biological role, provides the (R)-glutamate required for cell wall biosynthesis. In Sinorhizobium fredii (strain NBRC 101917 / NGR234), this protein is Glutamate racemase.